The chain runs to 393 residues: Prokineticin receptor 1 (393 aa).

Over 1–62 (METTVGALGE…TNSRTFFAAK (62 aa)) the chain is Extracellular. The N-linked (GlcNAc...) asparagine glycan is linked to N11. A helical membrane pass occupies residues 63–83 (IVIGMALVGIMLVCGIGNFIF). The Cytoplasmic portion of the chain corresponds to 84 to 98 (ITALARYKKLRNLTN). Residues 99–119 (LLIANLAISDFLVAIVCCPFE) form a helical membrane-spanning segment. At 120–146 (MDYYVVRQLSWEHGHVLCASVNYLRTV) the chain is on the extracellular side. Residues C137 and C217 are joined by a disulfide bond. A helical transmembrane segment spans residues 147–167 (SLYVSTNALLAIAIDRYLAIV). Residues 168 to 179 (HPLRPRMKCQTA) lie on the Cytoplasmic side of the membrane. The chain crosses the membrane as a helical span at residues 180-200 (AGLIFLVWSVSILIAIPAAYF). Residues 201–232 (TTETVLVIVERQEKIFCGQIWPVDQQFYYRSY) lie on the Extracellular side of the membrane. Residues 233–253 (FLLVFGLEFVGPVVAMTLCYA) traverse the membrane as a helical segment. At 254 to 282 (RVSRELWFKAVPGFQTEQIRRRLRCRRRT) the chain is on the cytoplasmic side. Residues 283–303 (VLGLVCVLSAYVLCWAPFYGF) form a helical membrane-spanning segment. Topologically, residues 304 to 322 (TIVRDFFPSVFVKEKHYLT) are extracellular. The chain crosses the membrane as a helical span at residues 323-343 (AFYVVECIAMSNSMINTLCFV). Residues 344-393 (TVRNNTSKYLKRILRLQWRASPSGSKASADLDLRTTGIPATEEVDCIRLK) lie on the Cytoplasmic side of the membrane.

Belongs to the G-protein coupled receptor 1 family. Expressed at high levels in the heart, skeletal muscle and pancreas. Expressed at lower levels in the brain, lung, liver and kidney.

It localises to the cell membrane. In terms of biological role, receptor for prokineticin 1. Exclusively coupled to the G(q) subclass of heteromeric G proteins. Activation leads to mobilization of calcium, stimulation of phosphoinositide turnover and activation of p44/p42 mitogen-activated protein kinase. May play a role during early pregnancy. This chain is Prokineticin receptor 1 (Prokr1), found in Mus musculus (Mouse).